The sequence spans 217 residues: Probable GTP-binding protein EngB (217 aa).

The EngB-type G domain occupies 37-214; sequence AGIEVAFAGR…RAAMIRLLDE (178 aa). GTP is bound by residues 45-52, 72-76, 92-95, 159-162, and 193-195; these read GRSNVGKS, GRTQE, DMPG, TKAD, and TSS. Ser52 and Thr74 together coordinate Mg(2+).

It belongs to the TRAFAC class TrmE-Era-EngA-EngB-Septin-like GTPase superfamily. EngB GTPase family. Mg(2+) is required as a cofactor.

Functionally, necessary for normal cell division and for the maintenance of normal septation. The polypeptide is Probable GTP-binding protein EngB (Rhodopseudomonas palustris (strain BisB5)).